The primary structure comprises 506 residues: Histidine ammonia-lyase (506 aa).

Positions 144 to 146 (ASG) form a cross-link, 5-imidazolinone (Ala-Gly). S145 carries the 2,3-didehydroalanine (Ser) modification.

Belongs to the PAL/histidase family. Contains an active site 4-methylidene-imidazol-5-one (MIO), which is formed autocatalytically by cyclization and dehydration of residues Ala-Ser-Gly.

It localises to the cytoplasm. The enzyme catalyses L-histidine = trans-urocanate + NH4(+). It functions in the pathway amino-acid degradation; L-histidine degradation into L-glutamate; N-formimidoyl-L-glutamate from L-histidine: step 1/3. This is Histidine ammonia-lyase from Legionella pneumophila (strain Lens).